Here is a 551-residue protein sequence, read N- to C-terminus: Methionine--tRNA ligase (551 aa).

The 'HIGH' region motif lies at 12-22 (PYANGPLHFGH). Residues Cys144, Cys147, Cys157, and Cys160 each contribute to the Zn(2+) site. Positions 330–334 (QFSKS) match the 'KMSKS' region motif. Lys333 contributes to the ATP binding site.

The protein belongs to the class-I aminoacyl-tRNA synthetase family. MetG type 1 subfamily. Monomer. Requires Zn(2+) as cofactor.

The protein resides in the cytoplasm. It catalyses the reaction tRNA(Met) + L-methionine + ATP = L-methionyl-tRNA(Met) + AMP + diphosphate. Is required not only for elongation of protein synthesis but also for the initiation of all mRNA translation through initiator tRNA(fMet) aminoacylation. The polypeptide is Methionine--tRNA ligase (metG) (Chlamydia pneumoniae (Chlamydophila pneumoniae)).